The chain runs to 445 residues: MSRDAPIKADKDYSQILKEEFPKIDSLAQNDCNSALDQLLVLEKKTRQASDLASSKEVLAKIVDLLASRNKWDDLNEQLTLLSKKHGQLKLSIQYMIQKVMEYLKSSKSLDLNTRISVIETIRVVTENKIFVEVERARVTKDLVEIKKEEGKIDEAADILCELQVETYGSMEMSEKIQFILEQMELSILKGDYSQATVLSRKILKKTFKNPKYESLKLEYYNLLVKISLHKREYLEVAQYLQEIYQTDAIKSDEAKWKPVLSHIVYFLVLSPYGNLQNDLIHKIQNDNNLKKLESQESLVKLFTTNELMRWPIVQKTYEPVLNEDDLAFGGEANKHHWEDLQKRVIEHNLRVISEYYSRITLLRLNELLDLTESQTETYISDLVNQGIIYAKVNRPAKIVNFEKPKNSSQLLNEWSHNVDELLEHIETIGHLITKEEIMHGLQAK.

Position 2 is an N-acetylserine (Ser2). The PCI domain maps to Glu233 to Asn407.

The protein belongs to the proteasome subunit p55 family. N-acetylated by NAT1.

In terms of biological role, acts as a regulatory subunit of the 26S proteasome which is involved in the ATP-dependent degradation of ubiquitinated proteins. The protein is 26S proteasome regulatory subunit RPN5 (RPN5) of Saccharomyces cerevisiae (strain ATCC 204508 / S288c) (Baker's yeast).